The sequence spans 612 residues: Dihydroxy-acid dehydratase (612 aa).

Asp-81 provides a ligand contact to Mg(2+). Residue Cys-122 participates in [2Fe-2S] cluster binding. The Mg(2+) site is built by Asp-123 and Lys-124. Lys-124 carries the N6-carboxylysine modification. Cys-193 lines the [2Fe-2S] cluster pocket. Glu-489 contributes to the Mg(2+) binding site. Residue Ser-515 is the Proton acceptor of the active site.

It belongs to the IlvD/Edd family. In terms of assembly, homodimer. It depends on [2Fe-2S] cluster as a cofactor. Requires Mg(2+) as cofactor.

The catalysed reaction is (2R)-2,3-dihydroxy-3-methylbutanoate = 3-methyl-2-oxobutanoate + H2O. It carries out the reaction (2R,3R)-2,3-dihydroxy-3-methylpentanoate = (S)-3-methyl-2-oxopentanoate + H2O. The protein operates within amino-acid biosynthesis; L-isoleucine biosynthesis; L-isoleucine from 2-oxobutanoate: step 3/4. Its pathway is amino-acid biosynthesis; L-valine biosynthesis; L-valine from pyruvate: step 3/4. Functions in the biosynthesis of branched-chain amino acids. Catalyzes the dehydration of (2R,3R)-2,3-dihydroxy-3-methylpentanoate (2,3-dihydroxy-3-methylvalerate) into 2-oxo-3-methylpentanoate (2-oxo-3-methylvalerate) and of (2R)-2,3-dihydroxy-3-methylbutanoate (2,3-dihydroxyisovalerate) into 2-oxo-3-methylbutanoate (2-oxoisovalerate), the penultimate precursor to L-isoleucine and L-valine, respectively. In Pseudomonas aeruginosa (strain LESB58), this protein is Dihydroxy-acid dehydratase.